An 812-amino-acid chain; its full sequence is Ribonucleoside-diphosphate reductase large subunit (812 aa).

The region spanning 12–103 is the ATP-cone domain; that stretch reads LYVIKRDGRQ…VSNLHKETKK (92 aa). ATP contacts are provided by residues 16–17, 22–28, Thr64, and Asp68; these read KR and EEVHFDK. Residues Ser213 and Ser228 each contribute to the GDP site. Cys229 and Cys455 are oxidised to a cystine. Residues 237 to 239, Lys254, Arg267, and 274 to 275 contribute to the dTTP site; these read DSI and CG. Residue Asn438 coordinates GDP. Asn438 acts as the Proton acceptor in catalysis. Cys440 functions as the Cysteine radical intermediate in the catalytic mechanism. Residues Glu442 and 615–618 contribute to the GDP site; that span reads TAST. Catalysis depends on Glu442, which acts as the Proton acceptor. Position 778 is a phosphothreonine (Thr778). Ser782 carries the post-translational modification Phosphoserine. Tyr786 bears the Phosphotyrosine mark.

It belongs to the ribonucleoside diphosphate reductase large chain family. Heterodimer of a large and a small subunit.

It catalyses the reaction a 2'-deoxyribonucleoside 5'-diphosphate + [thioredoxin]-disulfide + H2O = a ribonucleoside 5'-diphosphate + [thioredoxin]-dithiol. Under complex allosteric control mediated by deoxynucleoside triphosphates and ATP binding to separate specificity and activation sites on the M1 subunit. The type of nucleotide bound at the specificity site determines substrate preference. It seems probable that ATP makes the enzyme reduce CDP and UDP, dGTP favors ADP reduction and dTTP favors GDP reduction. Stimulated by ATP and inhibited by dATP binding to the activity site. In terms of biological role, provides the precursors necessary for DNA synthesis. Catalyzes the biosynthesis of deoxyribonucleotides from the corresponding ribonucleotides. This is Ribonucleoside-diphosphate reductase large subunit (RnrL) from Drosophila melanogaster (Fruit fly).